An 836-amino-acid chain; its full sequence is CUB domain-containing protein 1 (836 aa).

Residues 1–29 form the signal peptide; the sequence is MAGLNCGVSIALLGVLLLGAARLPRGAEA. At 30 to 667 the chain is on the extracellular side; sequence FEIALPRESN…TLTPRTVDLT (638 aa). Asn-39, Asn-122, Asn-180, Asn-205, Asn-270, Asn-310, and Asn-386 each carry an N-linked (GlcNAc...) asparagine glycan. Positions 417–544 constitute a CUB domain; that stretch reads CTDHRYCQRK…VSFIPYFKEE (128 aa). A disulfide bridge connects residues Cys-476 and Cys-499. Residues 668–688 traverse the membrane as a helical segment; the sequence is VILIAAVGGGVLLLSALGLII. The Cytoplasmic portion of the chain corresponds to 689 to 836; sequence CCVKKKKKKT…NTQEPMEPAE (148 aa). The residue at position 734 (Tyr-734) is a Phosphotyrosine. The tract at residues 776 to 836 is disordered; sequence PPTICSRAPT…NTQEPMEPAE (61 aa).

As to quaternary structure, interacts with CDH2/N-cadherin, CDH3/P-cadherin, SDC1/syndecan-1, SDC4/syndecan-4 and the serine protease ST14/MT-SP1. Also interacts with SRC and PRKCG/protein kinase C gamma. Phosphorylated on tyrosine by kinases of the SRC family such as SRC and YES as well as by the protein kinase C gamma/PRKCG. Dephosphorylated by phosphotyrosine phosphatases. Also phosphorylated by suramin, a heparin analog. Tyrosine phosphorylated in response to dissociation of integrin alpha-6 beta-4 from laminin-5. In terms of processing, N-glycosylated. Post-translationally, a soluble form may also be produced by proteolytic cleavage at the cell surface (shedding). Another peptide of 80 kDa (p80) is present in cultured keratinocytes probably due to tryptic cleavage at an unidentified site on its N-terminal side. Converted to p80 by plasmin, a trypsin-like protease. In terms of tissue distribution, highly expressed in mitotic cells with low expression during interphase. Detected at highest levels in skeletal muscle and colon with lower levels in kidney, small intestine, placenta and lung. Up-regulated in a number of human tumor cell lines, as well as in colorectal cancer, breast carcinoma and lung cancer. Also expressed in cells with phenotypes reminiscent of mesenchymal stem cells and neural stem cells.

It is found in the cell membrane. Its subcellular location is the secreted. In terms of biological role, may be involved in cell adhesion and cell matrix association. May play a role in the regulation of anchorage versus migration or proliferation versus differentiation via its phosphorylation. May be a novel marker for leukemia diagnosis and for immature hematopoietic stem cell subsets. Belongs to the tetraspanin web involved in tumor progression and metastasis. The protein is CUB domain-containing protein 1 (CDCP1) of Homo sapiens (Human).